Consider the following 192-residue polypeptide: Ion-translocating oxidoreductase complex subunit B (192 aa).

A hydrophobic region spans residues methionine 1–serine 26. The 4Fe-4S domain maps to glutamate 32 to valine 91. Positions 49, 52, 57, 74, 117, 120, 123, 127, 147, 150, 153, and 157 each coordinate [4Fe-4S] cluster. 4Fe-4S ferredoxin-type domains lie at methionine 108 to arginine 137 and alanine 138 to valine 167.

This sequence belongs to the 4Fe4S bacterial-type ferredoxin family. RnfB subfamily. The complex is composed of six subunits: RsxA, RsxB, RsxC, RsxD, RsxE and RsxG. [4Fe-4S] cluster is required as a cofactor.

It is found in the cell inner membrane. Its function is as follows. Part of a membrane-bound complex that couples electron transfer with translocation of ions across the membrane. Required to maintain the reduced state of SoxR. In Escherichia coli O8 (strain IAI1), this protein is Ion-translocating oxidoreductase complex subunit B.